The sequence spans 259 residues: Glucosamine-6-phosphate deaminase (259 aa).

Asp66 serves as the catalytic Proton acceptor; for enolization step. The active-site For ring-opening step is Asp135. The active-site Proton acceptor; for ring-opening step is the His137. Glu142 functions as the For ring-opening step in the catalytic mechanism.

The protein belongs to the glucosamine/galactosamine-6-phosphate isomerase family. NagB subfamily.

The catalysed reaction is alpha-D-glucosamine 6-phosphate + H2O = beta-D-fructose 6-phosphate + NH4(+). Its pathway is amino-sugar metabolism; N-acetylneuraminate degradation; D-fructose 6-phosphate from N-acetylneuraminate: step 5/5. Its function is as follows. Catalyzes the reversible isomerization-deamination of glucosamine 6-phosphate (GlcN6P) to form fructose 6-phosphate (Fru6P) and ammonium ion. In Rhodococcus jostii (strain RHA1), this protein is Glucosamine-6-phosphate deaminase.